The chain runs to 300 residues: uncharacterized protein (300 aa).

The segment covering 1–19 (MATKRAHPEDETHESKRAA) has biased composition (basic and acidic residues). Residues 1-20 (MATKRAHPEDETHESKRAAQ) form a disordered region.

This is an uncharacterized protein from Orgyia pseudotsugata multicapsid polyhedrosis virus (OpMNPV).